Consider the following 822-residue polypeptide: Molybdenum cofactor sulfurase (822 aa).

Lys239 carries the post-translational modification N6-(pyridoxal phosphate)lysine. Residue Cys401 is part of the active site. The interval 633 to 666 (TRISNPTRSSRRSQRALMPGSFPEDPSPTSEQPP) is disordered. One can recognise an MOSC domain in the interval 643-820 (RRSQRALMPG…VMVGDVVTPQ (178 aa)).

It belongs to the class-V pyridoxal-phosphate-dependent aminotransferase family. MOCOS subfamily. Requires pyridoxal 5'-phosphate as cofactor.

The catalysed reaction is Mo-molybdopterin + L-cysteine + AH2 = thio-Mo-molybdopterin + L-alanine + A + H2O. It participates in cofactor biosynthesis; molybdopterin biosynthesis. Its function is as follows. Sulfurates the molybdenum cofactor. Sulfation of molybdenum is essential for xanthine dehydrogenase (XDH) and aldehyde oxidase (ADO) enzymes in which molybdenum cofactor is liganded by 1 oxygen and 1 sulfur atom in active form. The polypeptide is Molybdenum cofactor sulfurase (Aspergillus oryzae (strain ATCC 42149 / RIB 40) (Yellow koji mold)).